We begin with the raw amino-acid sequence, 124 residues long: Phosphoribosyl-ATP pyrophosphatase (124 aa).

This sequence belongs to the PRA-PH family.

It localises to the cytoplasm. It carries out the reaction 1-(5-phospho-beta-D-ribosyl)-ATP + H2O = 1-(5-phospho-beta-D-ribosyl)-5'-AMP + diphosphate + H(+). It functions in the pathway amino-acid biosynthesis; L-histidine biosynthesis; L-histidine from 5-phospho-alpha-D-ribose 1-diphosphate: step 2/9. The protein is Phosphoribosyl-ATP pyrophosphatase of Ralstonia pickettii (strain 12J).